The chain runs to 715 residues: Gelsolin, cytoplasmic (715 aa).

Residues 1 to 124 (MTTELEIQKA…YLIGGVASGF (124 aa)) form an actin-severing region. One copy of the Gelsolin-like 1 repeat lies at 24-75 (FELVPVPKTNHGKFYTGDSYIILKTTALESGRGFEWNLHYWQGKESSQDERG). Residues 72-75 (DERG) form an actin-actin interfilament contact point region. Position 136 to 145 (136 to 145 (KVLTRVKGKR)) interacts with a 1,2-diacyl-sn-glycero-3-phospho-(1D-myo-inositol-4,5-bisphosphate). Gelsolin-like repeat units follow at residues 147 to 187 (VRAT…FEKN), 260 to 306 (LKIT…TERA), and 405 to 451 (LRKE…NERT). The segment at 384 to 715 (AAESKMIDDG…FLGWDKTLWD (332 aa)) is actin-binding, Ca-sensitive. Ca(2+) is bound by residues Gly421, Asp422, Glu449, Thr499, Asn539, Asp540, Glu562, Asp642, and Glu665. Gelsolin-like repeat units follow at residues 524-564 (CRAV…SEIQ) and 625-667 (FIAE…EEKM).

This sequence belongs to the villin/gelsolin family. In terms of tissue distribution, predominantly in the body wall muscle, but expression is not restricted to muscle cells.

It localises to the cytoplasm. It is found in the cytoskeleton. In terms of biological role, calcium-regulated, actin-modulating protein that binds to the plus (or barbed) ends of actin monomers or filaments, preventing monomer exchange (end-blocking or capping). It can promote the assembly of monomers into filaments (nucleation) as well as sever filaments already formed. This is Gelsolin, cytoplasmic from Halocynthia roretzi (Sea squirt).